Consider the following 428-residue polypeptide: D-amino acid dehydrogenase (428 aa).

3–17 (VVVLGSGVVGVTSAY) lines the FAD pocket.

It belongs to the DadA oxidoreductase family. FAD serves as cofactor.

It catalyses the reaction a D-alpha-amino acid + A + H2O = a 2-oxocarboxylate + AH2 + NH4(+). Its pathway is amino-acid degradation; D-alanine degradation; NH(3) and pyruvate from D-alanine: step 1/1. Its function is as follows. Oxidative deamination of D-amino acids. The protein is D-amino acid dehydrogenase of Paraburkholderia phytofirmans (strain DSM 17436 / LMG 22146 / PsJN) (Burkholderia phytofirmans).